Here is a 597-residue protein sequence, read N- to C-terminus: Alpha-1,2-mannosyltransferase MNN2 (597 aa).

Over 1–12 the chain is Cytoplasmic; that stretch reads MLLTKRFSKLFK. The helical; Signal-anchor for type II membrane protein transmembrane segment at 13 to 28 threads the bilayer; sequence LTFIVLILCGLFVITN. Residues 29–597 are Extracellular-facing; that stretch reads KYMDENTSVK…STHDKAIAGK (569 aa). 3 N-linked (GlcNAc...) asparagine glycosylation sites follow: Asn-34, Asn-363, and Asn-473.

Belongs to the MNN1/MNT family. Interacts with SVP26.

It is found in the golgi apparatus membrane. It functions in the pathway protein modification; protein glycosylation. Alpha-1,2-mannosyltransferase, responsible for addition of the first alpha-1,2-linked mannose to form the branches on the mannan backbone of oligosaccharides. The chain is Alpha-1,2-mannosyltransferase MNN2 (MNN2) from Saccharomyces cerevisiae (strain ATCC 204508 / S288c) (Baker's yeast).